A 23-amino-acid polypeptide reads, in one-letter code: Gastrin-releasing peptide (23 aa).

Methionine 23 is subject to Methionine amide.

This sequence belongs to the bombesin/neuromedin-B/ranatensin family.

It is found in the secreted. It localises to the cytoplasmic vesicle. Its subcellular location is the secretory vesicle lumen. Stimulates the release of gastrin and other gastrointestinal hormones. This is Gastrin-releasing peptide (grp) from Oncorhynchus mykiss (Rainbow trout).